The chain runs to 137 residues: 2-iminobutanoate/2-iminopropanoate deaminase (137 aa).

Serine 2 bears the N-acetylserine mark. An N6-succinyllysine mark is found at lysine 13, lysine 60, and lysine 67. Threonine 74 is subject to Phosphothreonine. Phosphoserine is present on serine 136.

It belongs to the RutC family. Homotrimer. Interacts with YTHDF2. As to expression, expressed predominantly in liver and kidney. Lower levels in lung and brain.

It is found in the cytoplasm. It localises to the nucleus. Its subcellular location is the peroxisome. The protein localises to the mitochondrion. It catalyses the reaction 2-iminobutanoate + H2O = 2-oxobutanoate + NH4(+). The enzyme catalyses 2-iminopropanoate + H2O = pyruvate + NH4(+). Catalyzes the hydrolytic deamination of enamine/imine intermediates that form during the course of normal metabolism. May facilitate the release of ammonia from these potentially toxic reactive metabolites, reducing their impact on cellular components. It may act on enamine/imine intermediates formed by several types of pyridoxal-5'-phosphate-dependent dehydratases including L-threonine dehydratase. Functionally, also promotes endoribonucleolytic cleavage of some transcripts by promoting recruitment of the ribonuclease P/MRP complex. Acts by bridging YTHDF2 and the ribonuclease P/MRP complex. RIDA/HRSP12 binds to N6-methyladenosine (m6A)-containing mRNAs containing a 5'-GGUUC-3' motif: cooperative binding of RIDA/HRSP12 and YTHDF2 to such transcripts lead to recruitment of the ribonuclease P/MRP complex and subsequent endoribonucleolytic cleavage. This Homo sapiens (Human) protein is 2-iminobutanoate/2-iminopropanoate deaminase.